We begin with the raw amino-acid sequence, 178 residues long: ATP-dependent protease subunit HslV (178 aa).

T7 is an active-site residue. Positions 162, 165, and 168 each coordinate Na(+).

The protein belongs to the peptidase T1B family. HslV subfamily. As to quaternary structure, a double ring-shaped homohexamer of HslV is capped on each side by a ring-shaped HslU homohexamer. The assembly of the HslU/HslV complex is dependent on binding of ATP.

Its subcellular location is the cytoplasm. The catalysed reaction is ATP-dependent cleavage of peptide bonds with broad specificity.. With respect to regulation, allosterically activated by HslU binding. In terms of biological role, protease subunit of a proteasome-like degradation complex believed to be a general protein degrading machinery. This is ATP-dependent protease subunit HslV from Paraburkholderia phymatum (strain DSM 17167 / CIP 108236 / LMG 21445 / STM815) (Burkholderia phymatum).